The following is a 337-amino-acid chain: Protein RecA (337 aa).

66–73 (GPESSGKT) contributes to the ATP binding site.

It belongs to the RecA family.

Its subcellular location is the cytoplasm. In terms of biological role, can catalyze the hydrolysis of ATP in the presence of single-stranded DNA, the ATP-dependent uptake of single-stranded DNA by duplex DNA, and the ATP-dependent hybridization of homologous single-stranded DNAs. It interacts with LexA causing its activation and leading to its autocatalytic cleavage. This is Protein RecA from Mesomycoplasma hyopneumoniae (strain J / ATCC 25934 / NCTC 10110) (Mycoplasma hyopneumoniae).